The following is a 131-amino-acid chain: Small ribosomal subunit protein uS11 (131 aa).

Residues methionine 1 to arginine 15 are compositionally biased toward basic residues. A disordered region spans residues methionine 1–alanine 23.

It belongs to the universal ribosomal protein uS11 family. Part of the 30S ribosomal subunit. Interacts with proteins S7 and S18. Binds to IF-3.

Functionally, located on the platform of the 30S subunit, it bridges several disparate RNA helices of the 16S rRNA. Forms part of the Shine-Dalgarno cleft in the 70S ribosome. This chain is Small ribosomal subunit protein uS11, found in Clostridium perfringens (strain 13 / Type A).